We begin with the raw amino-acid sequence, 619 residues long: N-acetylmuramoyl-L-alanine amidase domain-containing protein SAOUHSC_02979 (619 aa).

The N-terminal stretch at 1–27 (MPKNKILIYLLSTTLVLPTLVSPTAYA) is a signal peptide. Disordered regions lie at residues 25–83 (AYAD…TIDD), 134–226 (SDYE…SMSD), and 238–290 (EDAK…NQKD). Composition is skewed to basic and acidic residues over residues 30–65 (PQKD…KADK), 73–82 (NNDKKFKTID), and 137–146 (EQPRNGEKST). A compositionally biased stretch (low complexity) spans 147 to 156 (NDSNKNSDNS). The span at 157–175 (IKNDTDTQSSKQDKADNQK) shows a compositional bias: basic and acidic residues. A compositionally biased stretch (polar residues) spans 176-192 (APKSNNTKPSTSNKQPN). Over residues 214–226 (QKSSSKDNQSMSD) the composition is skewed to low complexity. Over residues 238-260 (EDAKKTQKDYASQSKKDKNEKSN) the composition is skewed to basic and acidic residues. Residues 327-468 (IAKDAHRIGQ…LNSIIKHYQL (142 aa)) are N-acetylmuramoyl-L-alanine amidase. In terms of domain architecture, Peptidase C51 spans 488–617 (DYDDSSDEFK…AAAEELSYIT (130 aa)).

The protein in the N-terminal section; belongs to the N-acetylmuramoyl-L-alanine amidase 2 family.

It localises to the secreted. This is N-acetylmuramoyl-L-alanine amidase domain-containing protein SAOUHSC_02979 from Staphylococcus aureus (strain NCTC 8325 / PS 47).